A 295-amino-acid polypeptide reads, in one-letter code: GTPase Era (295 aa).

Residues 7-176 form the Era-type G domain; sequence KTISVCIIGR…IKSKAKVSPW (170 aa). Positions 15-22 are G1; sequence GRPNSGKS. 15–22 provides a ligand contact to GTP; that stretch reads GRPNSGKS. Residues 41–45 are G2; it reads QTTRS. Residues 62-65 form a G3 region; the sequence is DTPG. GTP-binding positions include 62–66 and 124–127; these read DTPGI and NKID. The G4 stretch occupies residues 124–127; sequence NKID. The G5 stretch occupies residues 152 to 154; the sequence is ISA. Residues 204-281 form the KH type-2 domain; sequence LQQELPYKLT…HLFLFVKVHA (78 aa).

The protein belongs to the TRAFAC class TrmE-Era-EngA-EngB-Septin-like GTPase superfamily. Era GTPase family. Monomer.

The protein resides in the cytoplasm. It localises to the cell inner membrane. In terms of biological role, an essential GTPase that binds both GDP and GTP, with rapid nucleotide exchange. Plays a role in 16S rRNA processing and 30S ribosomal subunit biogenesis and possibly also in cell cycle regulation and energy metabolism. The sequence is that of GTPase Era from Rickettsia prowazekii (strain Madrid E).